We begin with the raw amino-acid sequence, 295 residues long: Hepatic leukemia factor (295 aa).

Residues 37–52 show a composition bias toward basic and acidic residues; the sequence is EDAFSKDKDKEKKLDD. Disordered stretches follow at residues 37 to 70 and 93 to 167; these read EDAF…PTLW and SENG…IDPD. The bZIP domain occupies 225-288; sequence DDKYWARRRK…GKCKNILAKY (64 aa). Residues 227-247 are basic motif; it reads KYWARRRKNNMAAKRSRDARR. Residues 248 to 255 form a leucine-zipper region; that stretch reads LKENQIAI.

It belongs to the bZIP family. PAR subfamily. As to quaternary structure, binds DNA specifically as homodimer or heterodimer with other PAR factors. Highly expressed in liver; lower levels in lung and kidney.

The protein localises to the nucleus. The sequence is that of Hepatic leukemia factor (HLF) from Homo sapiens (Human).